Here is a 126-residue protein sequence, read N- to C-terminus: Holo-[acyl-carrier-protein] synthase (126 aa).

The Mg(2+) site is built by Asp-9 and Glu-58.

The protein belongs to the P-Pant transferase superfamily. AcpS family. Requires Mg(2+) as cofactor.

The protein localises to the cytoplasm. The catalysed reaction is apo-[ACP] + CoA = holo-[ACP] + adenosine 3',5'-bisphosphate + H(+). In terms of biological role, transfers the 4'-phosphopantetheine moiety from coenzyme A to a Ser of acyl-carrier-protein. This chain is Holo-[acyl-carrier-protein] synthase, found in Shewanella frigidimarina (strain NCIMB 400).